A 353-amino-acid polypeptide reads, in one-letter code: Photosystem II D2 protein (353 aa).

Position 2 is an N-acetylthreonine (Thr-2). Thr-2 carries the post-translational modification Phosphothreonine. The chain crosses the membrane as a helical span at residues 41–61 (CAYFAVGGWFTGTTFVTSWYT). His-118 is a chlorophyll a binding site. A helical membrane pass occupies residues 125–141 (GFMLRQFELARSVQLRP). Pheophytin a contacts are provided by Gln-130 and Asn-143. Residues 153-166 (VFVSVFLIYPLGQS) form a helical membrane-spanning segment. Position 198 (His-198) interacts with chlorophyll a. The chain crosses the membrane as a helical span at residues 208-228 (AALLCAIHGATVENTLFEDGD). A plastoquinone contacts are provided by His-215 and Phe-262. His-215 provides a ligand contact to Fe cation. His-269 provides a ligand contact to Fe cation. The helical transmembrane segment at 279–295 (GLWMSALGVVGLALNLR) threads the bilayer.

This sequence belongs to the reaction center PufL/M/PsbA/D family. In terms of assembly, PSII is composed of 1 copy each of membrane proteins PsbA, PsbB, PsbC, PsbD, PsbE, PsbF, PsbH, PsbI, PsbJ, PsbK, PsbL, PsbM, PsbT, PsbX, PsbY, PsbZ, Psb30/Ycf12, at least 3 peripheral proteins of the oxygen-evolving complex and a large number of cofactors. It forms dimeric complexes. It depends on The D1/D2 heterodimer binds P680, chlorophylls that are the primary electron donor of PSII, and subsequent electron acceptors. It shares a non-heme iron and each subunit binds pheophytin, quinone, additional chlorophylls, carotenoids and lipids. There is also a Cl(-1) ion associated with D1 and D2, which is required for oxygen evolution. The PSII complex binds additional chlorophylls, carotenoids and specific lipids. as a cofactor.

Its subcellular location is the plastid. The protein localises to the chloroplast thylakoid membrane. The enzyme catalyses 2 a plastoquinone + 4 hnu + 2 H2O = 2 a plastoquinol + O2. Functionally, photosystem II (PSII) is a light-driven water:plastoquinone oxidoreductase that uses light energy to abstract electrons from H(2)O, generating O(2) and a proton gradient subsequently used for ATP formation. It consists of a core antenna complex that captures photons, and an electron transfer chain that converts photonic excitation into a charge separation. The D1/D2 (PsbA/PsbD) reaction center heterodimer binds P680, the primary electron donor of PSII as well as several subsequent electron acceptors. D2 is needed for assembly of a stable PSII complex. The protein is Photosystem II D2 protein of Cicer arietinum (Chickpea).